A 1030-amino-acid chain; its full sequence is Subtilin biosynthesis protein SpaB (1030 aa).

It to S.epidermidis EpiB and L.lactis NisB.

The protein localises to the cell membrane. Involved in the post-translational modification of the lantibiotic subtilin. This Bacillus subtilis protein is Subtilin biosynthesis protein SpaB (spaB).